The sequence spans 303 residues: Taste receptor type 2 member 13 (303 aa).

Residues 1-7 lie on the Extracellular side of the membrane; that stretch reads MESALPS. The chain crosses the membrane as a helical span at residues 8-28; the sequence is IFTLVIIAEFIIGNLSNGFIV. Residues 29 to 55 lie on the Cytoplasmic side of the membrane; that stretch reads LINCIDWVSKRELSSVDKLLIILAISR. A helical membrane pass occupies residues 56-76; the sequence is IGLIWEILVSWFLALHSLAIF. Residues 77-85 lie on the Extracellular side of the membrane; it reads VSGTGLRIM. The helical transmembrane segment at 86 to 106 threads the bilayer; that stretch reads IFSWIVSNHFNLWLATILSIF. Residues 107–128 are Cytoplasmic-facing; it reads YLLKIASFSSPAFLYLKRRVNK. A helical membrane pass occupies residues 129–149; it reads VILMILLGTLVFLFLNLIQIN. Residues 150 to 184 lie on the Extracellular side of the membrane; that stretch reads MLIKDWLDRYERNTTWNFSMSDFETFSVSVRFTMT. Residues Asn162 and Asn166 are each glycosylated (N-linked (GlcNAc...) asparagine). Residues 185 to 205 traverse the membrane as a helical segment; it reads MFSLTPFTVAFISFLLLVFSL. Residues 206 to 232 are Cytoplasmic-facing; that stretch reads QKHLQKMQLNYKGHRDPRTKVHTNALK. The helical transmembrane segment at 233 to 253 threads the bilayer; the sequence is IVISFLLFYASFFLSILISWI. Topologically, residues 254–261 are extracellular; sequence SELYQNTV. The helical transmembrane segment at 262 to 282 threads the bilayer; the sequence is IYMLCETIGAFYPSSHSFLLI. Over 283–303 the chain is Cytoplasmic; it reads LGNAKLRQAFLLVAAKVWAKR.

The protein belongs to the G-protein coupled receptor T2R family.

The protein localises to the membrane. Receptor that may play a role in the perception of bitterness and is gustducin-linked. May play a role in sensing the chemical composition of the gastrointestinal content. The activity of this receptor may stimulate alpha gustducin, mediate PLC-beta-2 activation and lead to the gating of TRPM5. This Pan paniscus (Pygmy chimpanzee) protein is Taste receptor type 2 member 13 (TAS2R13).